The primary structure comprises 1082 residues: uncharacterized protein (1082 aa).

The PNPLA domain occupies 50 to 319 (TTMTGGVSLA…LDNRPIGVLF (270 aa)). A GXSXG motif is present at residues 120 to 124 (GTSAG). The active-site Nucleophile is Ser122. Asp306 acts as the Proton acceptor in catalysis. Residues 306–308 (DGG) carry the DGA/G motif. 4 helical membrane passes run 959-979 (IARSTIIAGALLLVLGVAAAI), 982-1002 (VTVFGVTGLIAAGTGGLLVVL), 1012-1032 (LFALLSFSVVGAVLALATPVV), and 1057-1077 (WWHPLVVVGLIALVAIMIAAA).

The protein localises to the cell membrane. This is an uncharacterized protein from Mycobacterium tuberculosis (strain ATCC 25618 / H37Rv).